The sequence spans 417 residues: Alpha-ionylideneethane synthase aba3 (417 aa).

The protein belongs to the alpha-ionylideneethane synthase family.

It functions in the pathway hormone biosynthesis. Its function is as follows. Alpha-ionylideneethane synthase; part of the gene cluster that mediates the biosynthesis of abscisic acid (ABA), a phytohormone that acts antagonistically toward salicylic acid (SA), jasmonic acid (JA) and ethylene (ETH) signaling, to impede plant defense responses. The first step of the pathway catalyzes the reaction from farnesyl diphosphate to alpha-ionylideneethane performed by the alpha-ionylideneethane synthase aba3 via a three-step reaction mechanism involving 2 neutral intermediates, beta-farnesene and allofarnesene. The cytochrome P450 monooxygenase aba1 might then be involved in the conversion of alpha-ionylideneethane to alpha-ionylideneacetic acid. Alpha-ionylideneacetic acid is further converted to abscisic acid in 2 steps involving the cytochrome P450 monooxygenase aba2 and the short-chain dehydrogenase/reductase aba4, via the intermediates 1'-deoxy-ABA or 1',4'-trans-diol-ABA, depending on the order of action of these 2 enzymes. Aba2 is responsible for the hydroxylation of carbon atom C-1' and aba4 might be involved in the oxidation of the C-4' carbon atom. This Botryotinia fuckeliana (Noble rot fungus) protein is Alpha-ionylideneethane synthase aba3.